Consider the following 376-residue polypeptide: Alanine racemase (376 aa).

Lys40 serves as the catalytic Proton acceptor; specific for D-alanine. N6-(pyridoxal phosphate)lysine is present on Lys40. Arg138 provides a ligand contact to substrate. The active-site Proton acceptor; specific for L-alanine is the Tyr270. Met317 provides a ligand contact to substrate.

It belongs to the alanine racemase family. It depends on pyridoxal 5'-phosphate as a cofactor.

It carries out the reaction L-alanine = D-alanine. Its pathway is amino-acid biosynthesis; D-alanine biosynthesis; D-alanine from L-alanine: step 1/1. Catalyzes the interconversion of L-alanine and D-alanine. May also act on other amino acids. The sequence is that of Alanine racemase (alr) from Lactobacillus gasseri (strain ATCC 33323 / DSM 20243 / BCRC 14619 / CIP 102991 / JCM 1131 / KCTC 3163 / NCIMB 11718 / NCTC 13722 / AM63).